Here is a 175-residue protein sequence, read N- to C-terminus: Small ribosomal subunit protein uS4 (175 aa).

Residues 105–169 form the S4 RNA-binding domain; it reads RRLQTIVYRQ…SPLADSLHPA (65 aa).

Belongs to the universal ribosomal protein uS4 family. Part of the 30S ribosomal subunit. Contacts protein S5. The interaction surface between S4 and S5 is involved in control of translational fidelity.

One of the primary rRNA binding proteins, it binds directly to 16S rRNA where it nucleates assembly of the body of the 30S subunit. Functionally, with S5 and S12 plays an important role in translational accuracy. The sequence is that of Small ribosomal subunit protein uS4 from Haloquadratum walsbyi (strain DSM 16790 / HBSQ001).